Consider the following 319-residue polypeptide: ATP-dependent 6-phosphofructokinase (319 aa).

Gly-11 is a binding site for ATP. Residue 21-25 (RAVVR) participates in ADP binding. ATP contacts are provided by residues 72 to 73 (RS) and 102 to 105 (GDGS). Asp-103 provides a ligand contact to Mg(2+). 125–127 (TID) contacts substrate. Residue Asp-127 is the Proton acceptor of the active site. An ADP-binding site is contributed by Arg-154. Substrate contacts are provided by residues Arg-162 and 169 to 171 (MGR). Residues 185–187 (GAE), Arg-211, and 213–215 (KKH) contribute to the ADP site. Substrate-binding positions include Glu-222, Arg-243, and 249–252 (HVQR).

It belongs to the phosphofructokinase type A (PFKA) family. ATP-dependent PFK group I subfamily. Prokaryotic clade 'B1' sub-subfamily. As to quaternary structure, homotetramer. Requires Mg(2+) as cofactor.

The protein localises to the cytoplasm. It carries out the reaction beta-D-fructose 6-phosphate + ATP = beta-D-fructose 1,6-bisphosphate + ADP + H(+). It functions in the pathway carbohydrate degradation; glycolysis; D-glyceraldehyde 3-phosphate and glycerone phosphate from D-glucose: step 3/4. Its activity is regulated as follows. Allosterically activated by ADP and other diphosphonucleosides, and allosterically inhibited by phosphoenolpyruvate. Its function is as follows. Catalyzes the phosphorylation of D-fructose 6-phosphate to fructose 1,6-bisphosphate by ATP, the first committing step of glycolysis. The polypeptide is ATP-dependent 6-phosphofructokinase (Natranaerobius thermophilus (strain ATCC BAA-1301 / DSM 18059 / JW/NM-WN-LF)).